The primary structure comprises 915 residues: p53-induced death domain-containing protein 1 (915 aa).

N-acetylalanine is present on Ala-2. LRR repeat units follow at residues 131–152 (CLAH…VPEL), 154–176 (GLDA…GALP), 177–199 (ALTF…GSLS), 200–221 (TLQR…IGNL), 223–245 (SLSE…AGLR), 246–268 (SLRL…VHLP), and 269–290 (LITR…LLDA). Ser-304 carries the post-translational modification Phosphoserine. ZU5 domains are found at residues 327–459 (DLDS…VLRP) and 460–601 (VSNT…WYTT). 2 peptidase S68 regions span residues 428-457 (DLET…LVVL) and 571-599 (DITT…WLWY). Active-site residues include His-449, Ser-451, His-591, and Ser-593. Positions 585-721 (ARFQVTHFSW…TTALDREAQD (137 aa)) are UPA domain. The Death domain occupies 793–878 (TQSNLLSVAS…DVAEEVRAIL (86 aa)). Positions 888 to 915 (SIRRTGLAPEDSTLPGTSASQTPESAQA) are disordered. Over residues 901 to 915 (LPGTSASQTPESAQA) the composition is skewed to polar residues.

As to quaternary structure, forms a complex named the PIDDosome with CASP2 and CRADD. Forms a complex with IKBKG and RIPK1. Interacts with FADD and MADD. In terms of processing, undergoes autoproteolytic processing whose extent either directs cells towards survival or apoptotic pathways. Autoproteolytically cleaved into two main fragments PIDD-N and PIDD-C. PIDD-C can be further processed into PIDD-CC, a processing which is enhanced by DNA damage. The cleavage producing PIDD-C is required for translocation of PIDD1 to the nucleus upon DNA damage and activation of NF-kappa-B. PIDD-CC mediates the interaction with CRADD and the cleavage producing PIDD-CC is required for the activation of CASP2. PIDD-N remains associated with PIDD-C and PIDD-CC after cleavage. Ubiquitous.

It is found in the cytoplasm. The protein resides in the nucleus. Component of the DNA damage/stress response pathway that functions downstream of p53/TP53 and can either promote cell survival or apoptosis. Associated with CRADD and the CASP2 caspase, it forms the PIDDosome a complex that activates CASP2 and triggers apoptosis. Associated with IKBKG and RIPK1, it enhances sumoylation and ubiquitination of IKBKG which is important for activation of the transcription factor NF-kappa-B. This Mus musculus (Mouse) protein is p53-induced death domain-containing protein 1.